We begin with the raw amino-acid sequence, 141 residues long: Galactose-6-phosphate isomerase subunit LacA 1 (141 aa).

It belongs to the LacAB/RpiB family. Heteromultimeric protein consisting of LacA and LacB.

It catalyses the reaction aldehydo-D-galactose 6-phosphate = keto-D-tagatose 6-phosphate. It participates in carbohydrate metabolism; D-galactose 6-phosphate degradation; D-tagatose 6-phosphate from D-galactose 6-phosphate: step 1/1. The sequence is that of Galactose-6-phosphate isomerase subunit LacA 1 from Streptococcus pyogenes serotype M6 (strain ATCC BAA-946 / MGAS10394).